Here is a 221-residue protein sequence, read N- to C-terminus: Glutathione peroxidase (221 aa).

Residues 1-19 (MFIQLLILSYAILLQLIAT) form the signal peptide. Asparagine 28 is a glycosylation site (N-linked (GlcNAc...) asparagine). Cysteine 72 is a catalytic residue. N-linked (GlcNAc...) asparagine glycosylation is found at asparagine 87 and asparagine 90.

This sequence belongs to the glutathione peroxidase family. Homotetramer.

The protein localises to the secreted. It localises to the extracellular space. It carries out the reaction 2 glutathione + H2O2 = glutathione disulfide + 2 H2O. This is Glutathione peroxidase from Dirofilaria immitis (Canine heartworm).